The primary structure comprises 509 residues: Src substrate cortactin (509 aa).

The interval 1–28 (MWKASAGHAVSITQDDGGADDWETDPDF) is disordered. The segment covering 17–28 (GGADDWETDPDF) has biased composition (acidic residues). Cortactin repeat units lie at residues 80–116 (ASHGYGGKFGVEQDRMDKSAVGHEYQSKLSKHCSQVD), 117–153 (SVRGFGGKFGVQMDRVDQSAVGFEYQGKTEKHASQKD), 154–190 (YSSGFGGKYGVQADRVDKSAVGFDYQGKTEKHESQKD), 191–227 (YSKGFGGKYGIDKDKVDKSAVGFEYQGKTEKHESQKD), and 228–264 (YVKGFGGKFGVQTDRQDKCALGWDHQEKLQLHESQKD). N6-acetyllysine is present on residues lysine 87 and lysine 107. Serine 113 carries the post-translational modification Phosphoserine. An Omega-N-methylarginine modification is found at arginine 119. The residue at position 124 (lysine 124) is an N6-acetyllysine. Lysine 144 is subject to N6-acetyllysine; alternate. Residue lysine 144 forms a Glycyl lysine isopeptide (Lys-Gly) (interchain with G-Cter in SUMO1); alternate linkage. Lysine 144 is covalently cross-linked (Glycyl lysine isopeptide (Lys-Gly) (interchain with G-Cter in SUMO2); alternate). Serine 150 is subject to Phosphoserine. N6-acetyllysine occurs at positions 152, 161, and 171. Position 181 is an N6-acetyllysine; alternate (lysine 181). Residue lysine 181 forms a Glycyl lysine isopeptide (Lys-Gly) (interchain with G-Cter in SUMO1); alternate linkage. Lysine 181 participates in a covalent cross-link: Glycyl lysine isopeptide (Lys-Gly) (interchain with G-Cter in SUMO2); alternate. An N6-acetyllysine mark is found at lysine 193 and lysine 198. A Glycyl lysine isopeptide (Lys-Gly) (interchain with G-Cter in SUMO1) cross-link involves residue lysine 218. N6-acetyllysine is present on lysine 235. At serine 261 the chain carries Phosphoserine. The stretch at 265 to 287 (YAKGFGGKYGVQKDRMDKNASTF) is one Cortactin 6; truncated repeat. N6-acetyllysine is present on residues lysine 267, lysine 272, lysine 277, and lysine 309. The stretch at 311 to 364 (SNIRANFENLAKEREQEDRRKAEAERAQRMAQERQEQEEARRKLEEQARAKKQT) forms a coiled coil. The disordered stretch occupies residues 318 to 409 (ENLAKEREQE…EPEPEYSTEA (92 aa)). The span at 320-359 (LAKEREQEDRRKAEAERAQRMAQERQEQEEARRKLEEQAR) shows a compositional bias: basic and acidic residues. Threonine 364 carries the phosphothreonine modification. Phosphoserine occurs at positions 368, 370, 380, and 381. Position 384 is a phosphotyrosine; by FAK1 (tyrosine 384). Residues 393–406 (EPSYGSSEPEPEYS) are compositionally biased toward low complexity. Tyrosine 405 bears the Phosphotyrosine mark. Position 406 is a phosphoserine (serine 406). Residues tyrosine 429 and tyrosine 445 each carry the phosphotyrosine; by FAK1 modification. Phosphotyrosine; by SRC occurs at positions 445 and 448. The region spanning 451-509 (DLGITAIALYDYQAAGDDEISFDPDDVITNIEMIDDGWWRGVCKGRYGLFPANYVELRQ) is the SH3 domain.

As to quaternary structure, part of a complex composed of NEDD9, AURKA and CTTN; within the complex NEDD9 acts as a scaffold protein and is required for complex formation. Interacts (via N-terminus) with NEDD9. Identified in a complex containing FGFR4, NCAM1, CDH2, PLCG1, FRS2, SRC, SHC1, GAP43 and CTTN. Forms a complex with ABL1 and MYLK. Interacts with SHANK2 and SHANK3 (via its SH3 domain). Interacts with PLXDC2 and SRCIN1. Interacts with SAMSN1 (via SH3 domain). Interacts (via SH3 domain) with ASAP1 (via Pro-rich region). Interacts with FER. Interacts with FGD1. Interacts with ABL2. Interacts with CTTNBP2NL; this interaction may target CTTN to stress fibers. Interacts with CTTNBP2; this interaction may target CTTN at the cell cortex or dendritic spines. Interacts (via SH3 domain) with DNM2. Interacts with ACTN1. Interacts with KCNA2 (via non-phosphorylated C-terminus). Interacts with PTK2/FAK1. Interacts with KCNH1. Interacts (via SH3 domain) with DIP2A (via N-terminus); the interaction enhances CTTN acetylation and is required for proper synaptic transmission. Interacts with XIRP1 (via N-terminus); the interaction promotes CTTN localization to intercalated disks in cardiomyocytes. Acetylated. In terms of processing, phosphorylated by FER. Phosphorylated in response to FGR activation. Phosphorylation by SRC promotes MYLK binding. Tyrosine phosphorylation in transformed cells may contribute to cellular growth regulation and transformation. Phosphorylated by PKN2 at both serine and threonine residues in a GTP-bound Rac1-dependent manner in hyaluronan-induced astrocytes and hence down-regulated CTTN ability to associate with filamentous actin. Phosphorylated on tyrosine residues in response to CHRM1 activation. Phosphorylated by PTK2/FAK1 in response to cell adhesion. Detected in liver (at protein level).

The protein localises to the cytoplasm. It localises to the cytoskeleton. The protein resides in the cell projection. Its subcellular location is the lamellipodium. It is found in the ruffle. The protein localises to the dendrite. It localises to the cell membrane. The protein resides in the podosome. Its subcellular location is the cell junction. It is found in the focal adhesion. The protein localises to the membrane. It localises to the clathrin-coated pit. The protein resides in the dendritic spine. Its subcellular location is the cell cortex. It is found in the endoplasmic reticulum. Its function is as follows. Contributes to the organization of the actin cytoskeleton and cell shape. Plays a role in the formation of lamellipodia and in cell migration. Plays a role in the regulation of neuron morphology, axon growth and formation of neuronal growth cones. Through its interaction with CTTNBP2, involved in the regulation of neuronal spine density. Plays a role in focal adhesion assembly and turnover. In complex with ABL1 and MYLK regulates cortical actin-based cytoskeletal rearrangement critical to sphingosine 1-phosphate (S1P)-mediated endothelial cell (EC) barrier enhancement. Plays a role in intracellular protein transport and endocytosis, and in modulating the levels of potassium channels present at the cell membrane. Plays a role in receptor-mediated endocytosis via clathrin-coated pits. Required for stabilization of KCNH1 channels at the cell membrane. This is Src substrate cortactin from Rattus norvegicus (Rat).